A 126-amino-acid polypeptide reads, in one-letter code: Holo-[acyl-carrier-protein] synthase (126 aa).

Mg(2+)-binding residues include Asp9 and Glu58.

This sequence belongs to the P-Pant transferase superfamily. AcpS family. Requires Mg(2+) as cofactor.

It is found in the cytoplasm. It catalyses the reaction apo-[ACP] + CoA = holo-[ACP] + adenosine 3',5'-bisphosphate + H(+). Functionally, transfers the 4'-phosphopantetheine moiety from coenzyme A to a Ser of acyl-carrier-protein. The chain is Holo-[acyl-carrier-protein] synthase from Salmonella agona (strain SL483).